Consider the following 172-residue polypeptide: Water stress-inducible protein Rab21 (172 aa).

The segment at 1 to 172 (MEHQGQHGHV…KIKEKLPGQH (172 aa)) is disordered. The stretch at 3 to 28 (HQGQHGHVTSRVDEYGNPVGTGAGHG) is one Type A repeat. Residues 21-65 (VGTGAGHGQMGTAGMGTHGTTGGMGTHGTTGGMGTHGTTGTGGGQ) show a composition bias toward gly residues. Residues 98 to 115 (RRKKGIKEKIKEKLPGGN) form a Type B repeat. The segment covering 124–139 (GGTGGAYGQQGHGTGM) has biased composition (gly residues). A Type A repeat occupies 125–149 (GTGGAYGQQGHGTGMTTGTTGAHGT). Residues 140–153 (TTGTTGAHGTTTTD) are compositionally biased toward low complexity. Residues 154-172 (TGEKKGIMDKIKEKLPGQH) are compositionally biased toward basic and acidic residues. One copy of the Type B repeat lies at 156-172 (EKKGIMDKIKEKLPGQH).

Belongs to the plant dehydrin family.

It is found in the cytoplasm. This Oryza sativa subsp. indica (Rice) protein is Water stress-inducible protein Rab21 (RAB21).